A 390-amino-acid chain; its full sequence is Period circadian protein (390 aa).

Disordered regions lie at residues 27-120, 164-188, 247-266, and 327-356; these read VTAP…APPV, LEYS…WEGE, GGNG…STNQ, and SPSG…TSQA. A compositionally biased stretch (gly residues) spans 93–114; that stretch reads GTSGTGNSGDGGGGGGADGTGS. Over residues 247–256 the composition is skewed to gly residues; that stretch reads GGNGNVGSGN.

Forms a heterodimer with timeless (TIM); the complex then translocates into the nucleus. In terms of processing, phosphorylated with a circadian rhythmicity, probably by the double-time protein (dbt). Phosphorylation could be implicated in the stability of per monomer and in the formation of heterodimer per-tim.

It is found in the nucleus. The protein localises to the cytoplasm. Its subcellular location is the perinuclear region. Its function is as follows. Essential for biological clock functions. Determines the period length of circadian and ultradian rhythms; an increase in PER dosage leads to shortened circadian rhythms and a decrease leads to lengthened circadian rhythms. Essential for the circadian rhythmicity of locomotor activity, eclosion behavior, and for the rhythmic component of the male courtship song that originates in the thoracic nervous system. The biological cycle depends on the rhythmic formation and nuclear localization of the TIM-PER complex. Light induces the degradation of TIM, which promotes elimination of PER. Nuclear activity of the heterodimer coordinatively regulates PER and TIM transcription through a negative feedback loop. Behaves as a negative element in circadian transcriptional loop. Does not appear to bind DNA, suggesting indirect transcriptional inhibition. The protein is Period circadian protein (per) of Drosophila tropicalis (Fruit fly).